The sequence spans 149 residues: Transcriptional regulator MraZ (149 aa).

SpoVT-AbrB domains follow at residues 6–52 (RSHR…PYPD) and 81–124 (AEEM…DQSK).

This sequence belongs to the MraZ family. In terms of assembly, forms oligomers.

It localises to the cytoplasm. Its subcellular location is the nucleoid. This Nitratidesulfovibrio vulgaris (strain ATCC 29579 / DSM 644 / CCUG 34227 / NCIMB 8303 / VKM B-1760 / Hildenborough) (Desulfovibrio vulgaris) protein is Transcriptional regulator MraZ.